The following is a 168-amino-acid chain: uncharacterized protein (168 aa).

Positions 1–166 constitute a PfpI endopeptidase domain; the sequence is MRVLILAENE…FCGELIKILK (166 aa).

This sequence belongs to the peptidase C56 family.

This is an uncharacterized protein from Archaeoglobus fulgidus (strain ATCC 49558 / DSM 4304 / JCM 9628 / NBRC 100126 / VC-16).